The primary structure comprises 102 residues: Large ribosomal subunit protein eL21 (102 aa).

Residues 1–21 (MVRRSKGFRSRTRKKLRKKPR) are compositionally biased toward basic residues. Residues 1 to 33 (MVRRSKGFRSRTRKKLRKKPRERGLSPLGPMTQ) are disordered.

It belongs to the eukaryotic ribosomal protein eL21 family.

This Methanopyrus kandleri (strain AV19 / DSM 6324 / JCM 9639 / NBRC 100938) protein is Large ribosomal subunit protein eL21.